Reading from the N-terminus, the 271-residue chain is Mannosyl-3-phosphoglycerate phosphatase (271 aa).

The Nucleophile role is filled by aspartate 13. Aspartate 13, aspartate 15, and aspartate 214 together coordinate Mg(2+).

This sequence belongs to the HAD-like hydrolase superfamily. MPGP family. Mg(2+) is required as a cofactor.

It is found in the cytoplasm. The enzyme catalyses 2-O-(alpha-D-mannosyl)-3-phosphoglycerate + H2O = (2R)-2-O-(alpha-D-mannosyl)-glycerate + phosphate. The sequence is that of Mannosyl-3-phosphoglycerate phosphatase from Escherichia coli O139:H28 (strain E24377A / ETEC).